The primary structure comprises 416 residues: MEYSDDGRFDVIVVGAGVMGSSAAYQLAKRGQKTLLLEQFDFLHHRGSSHGESRTIRATYPEDYYYSMVSESTRLWAAAQSEIGYKVHFPTQQFDMGPADQQSLLSVVATCQKHGLAHRVMDSHAVSEHFSGRISIPENWIGVSTELGGIIKPTKAVSMFQTLAIGHGAILRDNTKVANIKRDGESGEGVIVCTVKGDKFYGKKCIVTAGAWISKLVKTVAGIDFPVEPLETTVCYWRIKEGHEEKFTIDGEFPTFASYGAPYVYGTPSLEYPGLIKVAVHGGYWCDPDKRPWGPGVKLEELKEWIKERFGGMVDSEGPVATQLCMYSMTPDEDFVIDFLGGEFGRDVVVGGGFSGHGFKMAPAVGRILADMAMEVEAGGGGVEMKQFSLRRFEDNPKGNAKEYPDQVILDVPLKH.

FAD is bound at residue 10 to 40; it reads DVIVVGAGVMGSSAAYQLAKRGQKTLLLEQF. S-8alpha-FAD cysteine is present on cysteine 325.

This sequence belongs to the MSOX/MTOX family. It depends on FAD as a cofactor.

It catalyses the reaction sarcosine + O2 + H2O = formaldehyde + glycine + H2O2. The polypeptide is Probable sarcosine oxidase (Arabidopsis thaliana (Mouse-ear cress)).